Reading from the N-terminus, the 172-residue chain is ATP synthase subunit b (172 aa).

The helical transmembrane segment at 11-30 (LIAQIINFVIVLWVLNRFAF) threads the bilayer.

Belongs to the ATPase B chain family. F-type ATPases have 2 components, F(1) - the catalytic core - and F(0) - the membrane proton channel. F(1) has five subunits: alpha(3), beta(3), gamma(1), delta(1), epsilon(1). F(0) has three main subunits: a(1), b(2) and c(10-14). The alpha and beta chains form an alternating ring which encloses part of the gamma chain. F(1) is attached to F(0) by a central stalk formed by the gamma and epsilon chains, while a peripheral stalk is formed by the delta and b chains.

It is found in the cell inner membrane. Its function is as follows. F(1)F(0) ATP synthase produces ATP from ADP in the presence of a proton or sodium gradient. F-type ATPases consist of two structural domains, F(1) containing the extramembraneous catalytic core and F(0) containing the membrane proton channel, linked together by a central stalk and a peripheral stalk. During catalysis, ATP synthesis in the catalytic domain of F(1) is coupled via a rotary mechanism of the central stalk subunits to proton translocation. In terms of biological role, component of the F(0) channel, it forms part of the peripheral stalk, linking F(1) to F(0). In Methylacidiphilum infernorum (isolate V4) (Methylokorus infernorum (strain V4)), this protein is ATP synthase subunit b.